The sequence spans 376 residues: N-acetyldiaminopimelate deacetylase (376 aa).

Aspartate 69 is an active-site residue. The active-site Proton acceptor is the glutamate 128.

It belongs to the peptidase M20A family. N-acetyldiaminopimelate deacetylase subfamily.

It catalyses the reaction N-acetyl-(2S,6S)-2,6-diaminopimelate + H2O = (2S,6S)-2,6-diaminopimelate + acetate. It functions in the pathway amino-acid biosynthesis; L-lysine biosynthesis via DAP pathway; LL-2,6-diaminopimelate from (S)-tetrahydrodipicolinate (acetylase route): step 3/3. In terms of biological role, catalyzes the conversion of N-acetyl-diaminopimelate to diaminopimelate and acetate. This is N-acetyldiaminopimelate deacetylase from Streptococcus pneumoniae serotype 4 (strain ATCC BAA-334 / TIGR4).